A 526-amino-acid polypeptide reads, in one-letter code: Acid-sensing ion channel 1 (526 aa).

Over 1-49 the chain is Cytoplasmic; the sequence is MELKTEEEEVGGVQPVSIQAFASSSTLHGLAHIFSYERLSLKRALWALC. The chain crosses the membrane as a helical span at residues 50–66; that stretch reads FLGSLAVLLCVCTERVQ. Topologically, residues 67-425 are extracellular; it reads YYFCYHHVTK…ETIEQKKAYE (359 aa). 7 cysteine pairs are disulfide-bonded: Cys-93–Cys-194, Cys-172–Cys-179, Cys-290–Cys-365, Cys-308–Cys-361, Cys-312–Cys-359, Cys-321–Cys-343, and Cys-323–Cys-335. 2 N-linked (GlcNAc...) asparagine glycosylation sites follow: Asn-366 and Asn-393. The discontinuously helical transmembrane segment at 426-456 threads the bilayer; it reads IAGLLGDIGGQMGLFIGASILTVLELFDYAY. The short motif at 442–444 is the GAS motif; ion selectivity filter element; that stretch reads GAS. Topologically, residues 457 to 526 are cytoplasmic; the sequence is EVIKHRLCRR…ARGTFEDFTC (70 aa). A Phosphoserine; by PKA modification is found at Ser-477. At Ser-497 the chain carries Phosphoserine.

It belongs to the amiloride-sensitive sodium channel (TC 1.A.6) family. ASIC1 subfamily. In terms of assembly, homotrimer. Heterotrimer; with other ASIC proteins producing channel with different properties. Interacts with PICK1; regulates ASIC1 clustering in membranes. Interacts with STOM; alters heterotrimeric ASIC channels activity. Post-translationally, pH-gating could be regulated by serine proteases. Phosphorylation by PKA regulates interaction with PICK1 and subcellular localization. Phosphorylation by PKC may regulate the channel. In terms of tissue distribution, expressed in brain areas receiving strong excitatory corticofugal input. In hippocampus, expressed in the hilus of the dentate gyrus. In the cerebral cortex expressed in anterior and posterior cingulate cortex, sensory and motor cortices. In the sensory cortex strongest expression is detected in the whisker barrel field. In sensorimotor and cingulate cortex expression is elevated in layer III. Also expressed in basal ganglia, striatum, ventral pallidum, olfactory tubercle, and nucleus accumbens. Weakly expressed in thalamus with the exception of the habenula and the medial septal nuclei. In olfactory bulb, preferentially expressed in the glomerular layer, within glomeruli. Expressed in cerebellum in the molecular and granule cell layers. Strongly expressed in amygdala complex, particularly in the lateral and basolateral nuclei. Isoform 1 is more abundant in brain compared to isoform 2 (at protein level). Expressed in the nodose ganglion and dorsal root ganglion. Expressed in dendritic spine cells.

The protein localises to the cell membrane. It is found in the postsynaptic cell membrane. The protein resides in the cell projection. Its subcellular location is the dendrite. It carries out the reaction Na(+)(in) = Na(+)(out). The enzyme catalyses Ca(2+)(in) = Ca(2+)(out). It catalyses the reaction K(+)(in) = K(+)(out). The catalysed reaction is Li(+)(in) = Li(+)(out). Inhibited by the diuretic drug amiloride. Its activity is regulated as follows. The activity of the channel is sensitive to rapid decrease in osmotic pressure. Forms voltage-independent, pH-gated trimeric sodium channels that act as postsynaptic excitatory receptors in the nervous system, playing a crucial role in regulating synaptic plasticity, learning, and memory. Upon extracellular pH drop this channel elicits transient, fast activating, and completely desensitizing inward currents. Displays high selectivity for sodium ions but can also permit the permeation of other cations. Regulates more or less directly intracellular calcium concentration and CaMKII phosphorylation, and thereby the density of dendritic spines. Modulates neuronal activity in the circuits underlying innate fear. In terms of biological role, has high selectivity for sodium ions but is also potentially permeable to other cations including potassium. Could function in cochlear mechanoelectrical transduction. The chain is Acid-sensing ion channel 1 from Mus musculus (Mouse).